The sequence spans 122 residues: Large ribosomal subunit protein uL18 (122 aa).

The protein belongs to the universal ribosomal protein uL18 family. In terms of assembly, part of the 50S ribosomal subunit; part of the 5S rRNA/L5/L18/L25 subcomplex. Contacts the 5S and 23S rRNAs.

In terms of biological role, this is one of the proteins that bind and probably mediate the attachment of the 5S RNA into the large ribosomal subunit, where it forms part of the central protuberance. The chain is Large ribosomal subunit protein uL18 from Trichlorobacter lovleyi (strain ATCC BAA-1151 / DSM 17278 / SZ) (Geobacter lovleyi).